Reading from the N-terminus, the 236-residue chain is uncharacterized protein (236 aa).

Residues 1–69 form the HTH gntR-type domain; sequence MLKYQQIATE…RGSGIFVRKH (69 aa). Residues 29 to 48 constitute a DNA-binding region (H-T-H motif); that stretch reads LETLMAQFEVSKSTITKSLE.

This is an uncharacterized protein from Bacillus subtilis (strain 168).